A 496-amino-acid chain; its full sequence is Cobyric acid synthase (496 aa).

Positions 250-437 (TLKVIAPALP…LHGLFESPQA (188 aa)) constitute a GATase cobBQ-type domain. The Nucleophile role is filled by C331. The active site involves H429.

Belongs to the CobB/CobQ family. CobQ subfamily.

The protein operates within cofactor biosynthesis; adenosylcobalamin biosynthesis. In terms of biological role, catalyzes amidations at positions B, D, E, and G on adenosylcobyrinic A,C-diamide. NH(2) groups are provided by glutamine, and one molecule of ATP is hydrogenolyzed for each amidation. This Hahella chejuensis (strain KCTC 2396) protein is Cobyric acid synthase.